The chain runs to 379 residues: MDNINGLPDDLLVKILSFVPTYVAVSTCVLSKRWEFLWMWLPNLEFVSPWDSRPGIVDFINKKLPIHRAPVIERLCIHINSNPHIKPEYIKRWIEIAVSHYVRELQIDYHSKTKITLQLEAESYFIDGKYLQQLISGCPVLEDLSLRFCCNDNLREFTVIIPSLQSLSLFLFGNSNLNRYKIDTPSLKYLKLEDWNDPEHYSWTNMPKLREAYVDVESSNHLKTLIGSITSVKHLTICCLEDYLYGDGFIFNHLEHLKLCMCPFDSSNLLGQLLKGSPNLQVLDIFEMKRNDIVCWNQPSSVLECLLSSLKILNWSAYFGRPQDRDIAVYILKNACHLKTATFLTDKRINDVRRLKMIKELRLSPRASSTCQLVFGEDF.

The region spanning 1–47 is the F-box domain; that stretch reads MDNINGLPDDLLVKILSFVPTYVAVSTCVLSKRWEFLWMWLPNLEFV. The region spanning 295-345 is the FBD domain; the sequence is CWNQPSSVLECLLSSLKILNWSAYFGRPQDRDIAVYILKNACHLKTATFLT.

The sequence is that of Putative FBD-associated F-box protein At5g38570 from Arabidopsis thaliana (Mouse-ear cress).